The primary structure comprises 291 residues: MNDALKTYSIGIGWFLLSLVSSSANDVMSKYLGTRLHSFEVAFFRFFFSSIVLLPFVVYYGKNTLKTSRPFVHILRGLLLFFGMTSWTYGLSIAPVTTATVISFSIPLFTLILAVFFLNENIIWQRWVVTIVGFVGLVITLKPHAEDFNPEMLYFVLAAISFAMLDIINKKFVVKESMISMLFYSAIVTAVVSIPAAANYWLTPTLFELALLFILGSSGSLILFLLLKAFSMVDATATAPYRYLELVISAIAAYFIFNEFPDKSTLHGAVIIIPATLFIIYSEKKAMSKKI.

10 helical membrane passes run 4–24 (ALKT…SSSA), 41–61 (VAFF…VYYG), 74–91 (ILRG…TYGL), 98–118 (TATV…VFFL), 121–141 (NIIW…VITL), 148–168 (FNPE…LDII), 178–198 (MISM…PAAA), 206–226 (LFEL…LFLL), 237–257 (ATAP…YFIF), and 260–280 (FPDK…LFII). EamA domains lie at 21–141 (SSSA…VITL) and 160–280 (ISFA…LFII).

Belongs to the drug/metabolite transporter (DMT) superfamily. 10 TMS drug/metabolite exporter (DME) (TC 2.A.7.3) family.

The protein localises to the cell inner membrane. Functionally, transports S-adenosylmethionine. This is S-adenosylmethionine uptake transporter (sam) from Rickettsia bellii (strain RML369-C).